A 691-amino-acid chain; its full sequence is Elongation factor G (691 aa).

In terms of domain architecture, tr-type G spans 10 to 284 (KMYRNIGIMA…AIVKYLPSPL (275 aa)). Residues 19-26 (AHIDAGKT), 83-87 (DTPGH), and 137-140 (NKMD) contribute to the GTP site.

Belongs to the TRAFAC class translation factor GTPase superfamily. Classic translation factor GTPase family. EF-G/EF-2 subfamily.

The protein localises to the cytoplasm. Catalyzes the GTP-dependent ribosomal translocation step during translation elongation. During this step, the ribosome changes from the pre-translocational (PRE) to the post-translocational (POST) state as the newly formed A-site-bound peptidyl-tRNA and P-site-bound deacylated tRNA move to the P and E sites, respectively. Catalyzes the coordinated movement of the two tRNA molecules, the mRNA and conformational changes in the ribosome. The protein is Elongation factor G of Clostridium tetani (strain Massachusetts / E88).